We begin with the raw amino-acid sequence, 334 residues long: GTP 3',8-cyclase (334 aa).

A Radical SAM core domain is found at 13-239 (RFHRKFYYLR…KVKAVNDGPA (227 aa)). R22 contributes to the GTP binding site. Positions 29 and 33 each coordinate [4Fe-4S] cluster. Y35 is a binding site for S-adenosyl-L-methionine. C36 contacts [4Fe-4S] cluster. Residue R73 participates in GTP binding. G77 serves as a coordination point for S-adenosyl-L-methionine. GTP is bound at residue T104. Residue S128 coordinates S-adenosyl-L-methionine. Position 165 (K165) interacts with GTP. Position 199 (M199) interacts with S-adenosyl-L-methionine. The [4Fe-4S] cluster site is built by C262 and C265. 267 to 269 (RLR) provides a ligand contact to GTP. C279 is a [4Fe-4S] cluster binding site.

This sequence belongs to the radical SAM superfamily. MoaA family. In terms of assembly, monomer and homodimer. It depends on [4Fe-4S] cluster as a cofactor.

The catalysed reaction is GTP + AH2 + S-adenosyl-L-methionine = (8S)-3',8-cyclo-7,8-dihydroguanosine 5'-triphosphate + 5'-deoxyadenosine + L-methionine + A + H(+). The protein operates within cofactor biosynthesis; molybdopterin biosynthesis. In terms of biological role, catalyzes the cyclization of GTP to (8S)-3',8-cyclo-7,8-dihydroguanosine 5'-triphosphate. The protein is GTP 3',8-cyclase of Vibrio atlanticus (strain LGP32) (Vibrio splendidus (strain Mel32)).